Reading from the N-terminus, the 684-residue chain is DNA ligase (684 aa).

Residues 48-52 (DYEYD), 97-98 (SL), and E129 each bind NAD(+). K131 functions as the N6-AMP-lysine intermediate in the catalytic mechanism. Residues R152, E189, K310, and K334 each coordinate NAD(+). Residues C429, C432, C447, and C452 each coordinate Zn(2+). Residues 609–684 (AQEGSLSGMS…ISWEELQAMI (76 aa)) enclose the BRCT domain.

The protein belongs to the NAD-dependent DNA ligase family. LigA subfamily. Requires Mg(2+) as cofactor. The cofactor is Mn(2+).

The catalysed reaction is NAD(+) + (deoxyribonucleotide)n-3'-hydroxyl + 5'-phospho-(deoxyribonucleotide)m = (deoxyribonucleotide)n+m + AMP + beta-nicotinamide D-nucleotide.. DNA ligase that catalyzes the formation of phosphodiester linkages between 5'-phosphoryl and 3'-hydroxyl groups in double-stranded DNA using NAD as a coenzyme and as the energy source for the reaction. It is essential for DNA replication and repair of damaged DNA. This chain is DNA ligase, found in Bdellovibrio bacteriovorus (strain ATCC 15356 / DSM 50701 / NCIMB 9529 / HD100).